A 471-amino-acid chain; its full sequence is Putative multidrug resistance protein MdtD (471 aa).

The Periplasmic portion of the chain corresponds to 1–11; sequence MTDLPDSTRWQ. Residues 12–32 form a helical membrane-spanning segment; sequence LWIVAFGFFMQSLDTTIVNTA. Residues 33–48 lie on the Cytoplasmic side of the membrane; that stretch reads LPSMAQSLGESPLHMH. Residues 49–69 form a helical membrane-spanning segment; sequence MVIVSYVLTVAVMLPASGWLA. The Periplasmic portion of the chain corresponds to 70 to 76; it reads DKVGVRN. Residues 77–97 form a helical membrane-spanning segment; the sequence is IFFTAIVLFTLGSLFCALSGT. Residues 98–101 lie on the Cytoplasmic side of the membrane; the sequence is LNEL. Residues 102 to 124 traverse the membrane as a helical segment; sequence LLARALQGVGGAMMVPVGRLTVM. The Periplasmic segment spans residues 125-137; it reads KIVPREQYMAAMT. The helical transmembrane segment at 138-158 threads the bilayer; that stretch reads FVTLPGQIGPLLGPALGGLLV. The Cytoplasmic segment spans residues 159-164; the sequence is EYASWH. The helical transmembrane segment at 165–185 threads the bilayer; that stretch reads WIFLINIPVGIIGAIATLMLM. Topologically, residues 186–196 are periplasmic; it reads PNYTMQTRRFD. The helical transmembrane segment at 197–217 threads the bilayer; the sequence is LSGFLLLAVGMAVLTLALDGS. Topologically, residues 218 to 224 are cytoplasmic; sequence KGTGFSP. The chain crosses the membrane as a helical span at residues 225–245; that stretch reads LAIAGLVAVGVVALVLYLLHA. Topologically, residues 246-262 are periplasmic; sequence QNNNRALFSLKLFRTRT. The chain crosses the membrane as a helical span at residues 263–283; it reads FSLGLAGSFAGRIGSGMLPFM. The Cytoplasmic portion of the chain corresponds to 284 to 285; it reads TP. A helical membrane pass occupies residues 286–306; sequence VFLQIGLGFSPFHAGLMMIPM. At 307 to 341 the chain is on the periplasmic side; that stretch reads VLGSMGMKRIVVQVVNRFGYRWVLVATTLGLSLVT. A helical membrane pass occupies residues 342–362; sequence LLFMTTALLGWYYVLPFVLFL. At 363–395 the chain is on the cytoplasmic side; sequence QGMVNSTRFSSMNTLTLKDLPDNLASSGNSLLS. A helical transmembrane segment spans residues 396-416; the sequence is MIMQLSMSIGVTIAGLLLGLF. The Periplasmic portion of the chain corresponds to 417–430; sequence GSQHVSVDSGTTQT. A helical transmembrane segment spans residues 431-451; the sequence is VFMYTWLSMAFIIALPAFVFA. Residues 452–471 lie on the Cytoplasmic side of the membrane; it reads RVPSDTHQNVAISRRKRSAQ.

Belongs to the major facilitator superfamily. TCR/Tet family.

Its subcellular location is the cell inner membrane. In Escherichia coli O81 (strain ED1a), this protein is Putative multidrug resistance protein MdtD.